Consider the following 338-residue polypeptide: Cytosolic sulfotransferase 16 (338 aa).

81–86 is a 3'-phosphoadenylyl sulfate binding site; it reads KTGTTW. The active-site Proton acceptor is H143. 3'-phosphoadenylyl sulfate contacts are provided by residues R165, S173, Y231, and 301 to 303; that span reads RKG.

Belongs to the sulfotransferase 1 family. As to expression, highly expressed in roots, stems and mature leaves. Low expression in young leaves and flowers. Barely detected in siliques.

Its subcellular location is the cytoplasm. It carries out the reaction (Z)-desulfoglucotropeolin + 3'-phosphoadenylyl sulfate = (Z)-glucotropeolin + adenosine 3',5'-bisphosphate + H(+). The catalysed reaction is (Z)-indolylmethyl desulfoglucosinolate + 3'-phosphoadenylyl sulfate = (Z)-glucobrassicin + adenosine 3',5'-bisphosphate + H(+). Its activity is regulated as follows. Inhibited by phosphoadenosine 5'-phosphate (PAP). Its function is as follows. Sulfotransferase that utilizes 3'-phospho-5'-adenylyl sulfate (PAPS) as sulfonate donor to catalyze the sulfate conjugation of desulfo-glucosinolates (dsGSs), the final step in the biosynthesis of the glucosinolate core structure. Substrate preference is desulfo-2-phenylethyl glucosinolate &gt; desulfo-indol-3-yl methyl glucosinolate &gt; desulfo-benzyl glucosinolate &gt; desulfo-6-methylthiohexyl glucosinolate &gt; desulfo-4-methylthiobutyl glucosinolate &gt; desulfo-3-methylthiopropyl glucosinolate &gt; desulfo-singrin &gt; desulfo-3-butenyl glucosinolate. In Arabidopsis thaliana (Mouse-ear cress), this protein is Cytosolic sulfotransferase 16 (SOT16).